Here is a 219-residue protein sequence, read N- to C-terminus: uncharacterized protein (219 aa).

A disordered region spans residues 42 to 71 (RQPRVVPVTSSDPEVVDDEDDEDQSDDSDE). Low complexity predominate over residues 45-54 (RVVPVTSSDP). Acidic residues predominate over residues 55-71 (EVVDDEDDEDQSDDSDE).

This is an uncharacterized protein from Dryophytes versicolor (chameleon treefrog).